The sequence spans 1738 residues: Sodium leak channel NALCN (1738 aa).

The Cytoplasmic portion of the chain corresponds to 1–36 (MLKRKQSSRVEAQPVTDFGPDESLSDNADILWINKP). The chain crosses the membrane as a helical span at residues 37–57 (WVHSLLRICAIISVIPVCMNT). Topologically, residues 58 to 65 (PMTFEHYP) are extracellular. Residues 66-90 (PLQYVTFTLDTLLMFLYTAEMIAKM) traverse the membrane as a helical segment. Over 91–106 (HIRGIVKGDSSYVKDR) the chain is Cytoplasmic. The chain crosses the membrane as a helical span at residues 107-129 (WCVFDGFMVFCLWVSLVLQVFEI). The Extracellular portion of the chain corresponds to 130 to 137 (ADIVDQMS). A helical; Voltage-sensor membrane pass occupies residues 138–158 (PWGMLRIPRPLIMIRAFRIYF). Residues 159–173 (RFELPRTRITNILKR) lie on the Cytoplasmic side of the membrane. Residues 174–199 (SGEQIWSVSIFLLFFLLLYGILGVQM) form a helical membrane-spanning segment. Over 200–269 (FGTFTYHCVV…YSGFNEIGTS (70 aa)) the chain is Extracellular. 2 cysteine pairs are disulfide-bonded: Cys207-Cys239 and Cys229-Cys245. N-linked (GlcNAc...) asparagine glycans are attached at residues Asn210 and Asn216. The segment at residues 270 to 289 (IFTVYEASSQEGWVFLMYRA) is an intramembrane region (pore-forming). Topologically, residues 290 to 294 (IDSFP) are extracellular. The helical transmembrane segment at 295–322 (RWRSYFYFITLIFFLAWLVKNVFIAVII) threads the bilayer. The Cytoplasmic segment spans residues 323 to 382 (ETFAEIRVQFQQMWGTRSSTTSTATTQMFHEDAAGGWQLVAVDVNKPQGRAPACLQKMMR). The chain crosses the membrane as a helical span at residues 383–403 (SSVFHMFILSMVTVDVIVAAS). At 404–416 (NYYKGENFRRQYD) the chain is on the extracellular side. A helical transmembrane segment spans residues 417–439 (EFYLAEVAFTVLFDLEALLKIWC). Residues 440 to 447 (LGFTGYIS) lie on the Cytoplasmic side of the membrane. A helical membrane pass occupies residues 448–468 (SSLHKFELLLVIGTTLHVYPD). The Extracellular portion of the chain corresponds to 469-472 (LYHS). The helical; Voltage-sensor transmembrane segment at 473–492 (QFTYFQVLRVVRLIKISPAL) threads the bilayer. Residues 493–502 (EDFVYKIFGP) are Cytoplasmic-facing. The chain crosses the membrane as a helical span at residues 503–530 (GKKLGSLVVFTASLLIVMSAISLQMFCF). Residues 531–543 (VEELDRFTTFPRA) are Extracellular-facing. Positions 544 to 563 (FMSMFQILTQEGWVDVMDQT) form an intramembrane region, pore-forming. The Extracellular portion of the chain corresponds to 564 to 569 (LNAVGH). Residues 570-599 (MWAPLVAIYFILYHLFATLILLSLFVAVIL) traverse the membrane as a helical segment. Topologically, residues 600–886 (DNLELDEDLK…QLYDLLGLVT (287 aa)) are cytoplasmic. Residues 762 to 789 (QERRSLRHGSNSQRISRGKSLETLTQDH) are disordered. The stretch at 795-830 (YRNAQREDSEIKMIQEKKEQAEMKRKVQEEELRENH) forms a coiled coil. The chain crosses the membrane as a helical span at residues 887 to 906 (YLDWVMITVTICSCISMMFE). The Extracellular portion of the chain corresponds to 907–915 (SPFRRVMHA). The chain crosses the membrane as a helical span at residues 916 to 939 (PTLQIAEYVFVIFMSIELNLKIMA). Over 940 to 947 (DGLFFTPT) the chain is Cytoplasmic. Residues 948-972 (AVIRDFGGVMDIFIYLVSLIFLCWM) traverse the membrane as a helical segment. The Extracellular portion of the chain corresponds to 973 to 980 (PQNVPAES). Residues 981–1003 (GAQLLMVLRCLRPLRIFKLVPQM) form a helical; Voltage-sensor membrane-spanning segment. The Cytoplasmic portion of the chain corresponds to 1004–1015 (RKVVRELFSGFK). A helical membrane pass occupies residues 1016–1039 (EIFLVSILLLTLMLVFASFGVQLF). Residues 1040–1104 (AGKLAKCNDP…NFNFDNVGNA (65 aa)) lie on the Extracellular side of the membrane. A disulfide bridge connects residues Cys1046 and Cys1057. An N-linked (GlcNAc...) asparagine glycan is attached at Asn1064. Positions 1105-1124 (MLALFEVLSLKGWVEVRDVI) form an intramembrane region, pore-forming. Topologically, residues 1125-1129 (IHRVG) are extracellular. The chain crosses the membrane as a helical span at residues 1130-1159 (PIHGIYIHVFVFLGCMIGLTLFVGVVIANF). Residues 1160-1210 (NENKGTALLTVDQRRWEDLKSRLKIAQPLHLPPRPDNDGFRAKMYDITQHP) lie on the Cytoplasmic side of the membrane. A helical membrane pass occupies residues 1211 to 1227 (FFKRTIALLVLAQSVLL). Residues 1228–1236 (SVKWDVEDP) lie on the Extracellular side of the membrane. Residues 1237 to 1260 (VTVPLATMSVVFTFIFVLEVTMKI) form a helical membrane-spanning segment. Residues 1261-1271 (IAMSPAGFWQS) are Cytoplasmic-facing. The helical transmembrane segment at 1272–1293 (RRNRYDLLVTSLGVVWVVLHFA) threads the bilayer. The Extracellular portion of the chain corresponds to 1294–1296 (LLN). Residues 1297–1318 (AYTYMMGACVIVFRFFSICGKH) traverse the membrane as a helical; Voltage-sensor segment. Topologically, residues 1319–1331 (VTLKMLLLTVVVS) are cytoplasmic. A helical membrane pass occupies residues 1332–1357 (MYKSFFIIVGMFLLLLCYAFAGVVLF). Topologically, residues 1358–1378 (GTVKYGENINRHANFSSAGKA) are extracellular. Residues 1379 to 1398 (ITVLFRIVTGEDWNKIMHDC) constitute an intramembrane region (pore-forming). The Extracellular portion of the chain corresponds to 1399 to 1420 (MVQPPFCTPDEFTYWATDCGNY). Cys1405 and Cys1417 are oxidised to a cystine. The chain crosses the membrane as a helical span at residues 1421–1447 (AGALMYFCSFYVIIAYIMLNLLVAIIV). Over 1448–1738 (ENFSLFYSTE…DESGDDLLDI (291 aa)) the chain is Cytoplasmic. The tract at residues 1611–1679 (PPSIETTQPS…WRLPSAPKPI (69 aa)) is disordered. Residues 1613-1631 (SIETTQPSEDTNANSQDHN) are compositionally biased toward polar residues. Residues 1633–1648 (QPESSSQQQLLSPTLS) show a composition bias toward low complexity.

It belongs to the NALCN family. In terms of assembly, found in a complex with NALCN, UNC79, UNC80 and NACL1; these auxiliary subunits are indispensable for the function of NALCN channel. Interacts with UNC80; required for the NALCN activation/inhibition by GPCRs in neurons. Found in a complex with NALCN, UNC79 and UNC80; UNC80 bridges NALCN to UNC79. Interacts with CHRM3. Post-translationally, phosphorylated on tyrosine residues. Predominantly expressed in the brain, moderately in the heart and weakly in the pancreas.

It localises to the cell membrane. It carries out the reaction Na(+)(in) = Na(+)(out). With respect to regulation, inhibited by low micromolar concentrations of Gd(3+) and high micromolar concentrations of verapamil. Insensitive to tetrodotoxin (TTX) and potentiated by low external Ca(2+) concentration. Functionally, voltage-gated ion channel responsible for the resting Na(+) permeability that controls neuronal excitability. NALCN channel functions as a multi-protein complex, which consists at least of NALCN, NALF1, UNC79 and UNC80. NALCN is the voltage-sensing, pore-forming subunit of the NALCN channel complex. NALCN channel complex is constitutively active and conducts monovalent cations but is blocked by physiological concentrations of extracellular divalent cations. In addition to its role in regulating neuronal excitability, is required for normal respiratory rhythm, systemic osmoregulation by controlling the serum sodium concentration and in the regulation of the intestinal pace-making activity in the interstitial cells of Cajal. NALCN channel is also activated by neuropeptides such as neurotensin and substance P (SP) through a SRC family kinases-dependent pathway. In addition, NALCN activity is enhanced/modulated by several GPCRs, such as CHRM3. This Rattus norvegicus (Rat) protein is Sodium leak channel NALCN (Nalcn).